A 188-amino-acid polypeptide reads, in one-letter code: CXXC-type zinc finger protein 4 (188 aa).

A disordered region spans residues 1–20; it reads MHRNDSQRLGKPGGAPESLQ. Residues 122–163 form a CXXC-type zinc finger; that stretch reads AKKKRKRCGVCVPCKRLINCGVCSSCRNRKTGHQICKFRKCE. Residues Cys129, Cys132, Cys135, Cys141, Cys144, Cys147, Cys157, and Cys162 each coordinate Zn(2+).

The protein resides in the cytoplasm. In terms of biological role, acts as a negative regulator of the Wnt signaling pathway required for anterior neural structure formation. Binds preferentially to DNA containing cytidine-phosphate-guanosine (CpG) dinucleotides over CpH (H=A, T, and C), hemimethylated-CpG and hemimethylated-hydroxymethyl-CpG. The polypeptide is CXXC-type zinc finger protein 4 (cxxc4) (Xenopus tropicalis (Western clawed frog)).